Consider the following 134-residue polypeptide: Small ribosomal subunit protein uS11 (134 aa).

The protein belongs to the universal ribosomal protein uS11 family. In terms of assembly, part of the 30S ribosomal subunit. Interacts with proteins S7 and S18. Binds to IF-3.

In terms of biological role, located on the platform of the 30S subunit, it bridges several disparate RNA helices of the 16S rRNA. Forms part of the Shine-Dalgarno cleft in the 70S ribosome. The chain is Small ribosomal subunit protein uS11 from Polaromonas naphthalenivorans (strain CJ2).